A 255-amino-acid polypeptide reads, in one-letter code: Probable transcriptional regulatory protein CMS0715 (255 aa).

It belongs to the TACO1 family.

It is found in the cytoplasm. This Clavibacter sepedonicus (Clavibacter michiganensis subsp. sepedonicus) protein is Probable transcriptional regulatory protein CMS0715.